A 526-amino-acid polypeptide reads, in one-letter code: D-arabinono-1,4-lactone oxidase (526 aa).

Residues 22–196 enclose the FAD-binding PCMH-type domain; sequence FWSRPSLYFQ…VYATLRTVPA (175 aa). The residue at position 59 (His-59) is a Pros-8alpha-FAD histidine.

It belongs to the oxygen-dependent FAD-linked oxidoreductase family. FAD serves as cofactor.

The protein resides in the mitochondrion membrane. The catalysed reaction is D-arabinono-1,4-lactone + O2 = dehydro-D-arabinono-1,4-lactone + H2O2 + H(+). It functions in the pathway cofactor biosynthesis; D-erythroascorbate biosynthesis; dehydro-D-arabinono-1,4-lactone from D-arabinose: step 2/2. This is D-arabinono-1,4-lactone oxidase (ALO1) from Yarrowia lipolytica (strain CLIB 122 / E 150) (Yeast).